The following is a 486-amino-acid chain: Membrane-bound lytic murein transglycosylase F (486 aa).

The first 21 residues, 1–21, serve as a signal peptide directing secretion; it reads MKRLKINYILIGVVTLLLALA. The interval 22–268 is non-LT domain; sequence LWPNITWRGG…RLEEKYLGHV (247 aa). The interval 269–486 is LT domain; sequence GSFDYVDTKT…AVTPELALNF (218 aa). The active site involves glutamate 313.

It in the N-terminal section; belongs to the bacterial solute-binding protein 3 family. This sequence in the C-terminal section; belongs to the transglycosylase Slt family.

Its subcellular location is the cell outer membrane. The enzyme catalyses Exolytic cleavage of the (1-&gt;4)-beta-glycosidic linkage between N-acetylmuramic acid (MurNAc) and N-acetylglucosamine (GlcNAc) residues in peptidoglycan, from either the reducing or the non-reducing ends of the peptidoglycan chains, with concomitant formation of a 1,6-anhydrobond in the MurNAc residue.. Functionally, murein-degrading enzyme that degrades murein glycan strands and insoluble, high-molecular weight murein sacculi, with the concomitant formation of a 1,6-anhydromuramoyl product. Lytic transglycosylases (LTs) play an integral role in the metabolism of the peptidoglycan (PG) sacculus. Their lytic action creates space within the PG sacculus to allow for its expansion as well as for the insertion of various structures such as secretion systems and flagella. The sequence is that of Membrane-bound lytic murein transglycosylase F from Serratia proteamaculans (strain 568).